The primary structure comprises 191 residues: MTLLQVMAADDAARVRLRTTEEAAIAAELAAHGITFDRWPVLDDAAALSSDDLLAHYADRIAALNADGRYRHIDVARIHPDDADPQWPQTARAARTKFLDEHRHAEDEVRFFAAGRGCFYLHLGAEVLAVVCEGGDLMSVPAGTLHWFDMGERPDFIAVRFFEEADGWVGDFTGDRISAGFPTLDDLLTAP.

Positions 102, 104, 108, and 146 each coordinate Fe(2+). Residues H102, H104, E108, and H146 each coordinate Ni(2+).

Belongs to the acireductone dioxygenase (ARD) family. In terms of assembly, monomer. The cofactor is Fe(2+). Requires Ni(2+) as cofactor.

It catalyses the reaction 1,2-dihydroxy-5-(methylsulfanyl)pent-1-en-3-one + O2 = 3-(methylsulfanyl)propanoate + CO + formate + 2 H(+). The enzyme catalyses 1,2-dihydroxy-5-(methylsulfanyl)pent-1-en-3-one + O2 = 4-methylsulfanyl-2-oxobutanoate + formate + 2 H(+). It functions in the pathway amino-acid biosynthesis; L-methionine biosynthesis via salvage pathway; L-methionine from S-methyl-5-thio-alpha-D-ribose 1-phosphate: step 5/6. Its function is as follows. Catalyzes 2 different reactions between oxygen and the acireductone 1,2-dihydroxy-3-keto-5-methylthiopentene (DHK-MTPene) depending upon the metal bound in the active site. Fe-containing acireductone dioxygenase (Fe-ARD) produces formate and 2-keto-4-methylthiobutyrate (KMTB), the alpha-ketoacid precursor of methionine in the methionine recycle pathway. Ni-containing acireductone dioxygenase (Ni-ARD) produces methylthiopropionate, carbon monoxide and formate, and does not lie on the methionine recycle pathway. This chain is Acireductone dioxygenase 2, found in Nocardia farcinica (strain IFM 10152).